A 268-amino-acid chain; its full sequence is Chymotrypsin-C (268 aa).

The signal sequence occupies residues 1–16 (MLGITVLAAILACASC). Residues 17–29 (CGNPAFPPNLSTR) constitute a propeptide, activation peptide. 5 disulfides stabilise this stretch: Cys17–Cys141, Cys59–Cys75, Cys155–Cys222, Cys186–Cys202, and Cys212–Cys243. Residue Asn25 is glycosylated (N-linked (GlcNAc...) asparagine). The Peptidase S1 domain maps to 30-267 (VVGGEDAVPN…YNDWINEKIQ (238 aa)). The active-site Charge relay system is the His74. Asn90 carries an N-linked (GlcNAc...) asparagine glycan. Catalysis depends on Asp121, which acts as the Charge relay system. The active-site Charge relay system is the Ser216.

This sequence belongs to the peptidase S1 family. Elastase subfamily. As to expression, pancreas.

The enzyme catalyses Preferential cleavage: Leu-|-Xaa, Tyr-|-Xaa, Phe-|-Xaa, Met-|-Xaa, Trp-|-Xaa, Gln-|-Xaa, Asn-|-Xaa.. In terms of biological role, regulates activation and degradation of trypsinogens and procarboxypeptidases by targeting specific cleavage sites within their zymogen precursors. Has chymotrypsin-type protease activity and hypocalcemic activity. Cleaves TRY4 and TRY5 and thereby inhibits their autoactivation. This chain is Chymotrypsin-C (Ctrc), found in Rattus norvegicus (Rat).